We begin with the raw amino-acid sequence, 4134 residues long: MAGGVQECLQELHGCLQPGDAMRGYGLLRGLGEACLTCLAGGALALHVSLVFAPERGLLAFVCRSLGVEEFRECREEALKFLCVFLERIGERAHPYACSLKQTCISVYTKERAAKCKIPALELLIKLLQSLRRSCLMEEMKVGEIFNKFYGELAVRSKISDTVLEKIYELLGVLGEVHPADMINNSEKLFRAYLGELKTQMTSATRVPKLPIVAGCLRGLTALMYNFTKSVDEDAQTSKEIFDFAVKAIRPQVDQKRYAVHLAGLQLFSWHAAQFGTLLLDSYVMLFETMCRWCGHTNQELKKAGHNALDSFLKQMSLMVAKDAELHKSKLKFFMEQFYGIIRRMDSSNKELSIAIRGYGLFAAPCKAMHPADVDAMYIELLQRCKQMYLTEAETIDDHLYQLPSFLQSIASVIFHLDTIPEVYTPVLEHLVVLQINSFPRYSEKMQLVCCRSIIKVFLALSIKGPVLWNFISTVVHQGLIRVFSKPMKFSKDVFGKETSGSEEFPESGEVDTARWKVPTYKDYLYLFRSLLSCDTMKESIFEEENFLTGNSPLQSLNRLLYDELIKSILKIIEKLDLTVQKLNVHEQDENETDSAFIGPTSDPASNLQPKKPTDFIAFINLVEFCRDILPDKHVEYFQPWVYSFGYELIIHSTRLPLISGFYKLLSVTMKIAKKIKYFEGVGPKSLRKATEDPEKSSCFALFAKFGKEVTAKMKQYKDELLASCLNFLLSLPHDIVMLDIKAYIPALQNAFKLGLSCTPMADLGLDALEDWSAHIPRHIMQPYYKDVLPLLDGYLKNSATTVEPQNNWEVRKLSRAAQKGFNKIVIQRLRKAKTSSLDDNPSLEAVRTRVARLLGSLGGQINHNLITATSAEEMMKKCVSWDTKNHLSFAVPFADMKPVIYLDVFLPRVTDLALSASDRQTKIAACELLHSIVAYMLGKASQMPERQQGPPPMHQLYKRIFPVLLRLACDVDQVTRQLYEPLVMQLIHWFTNNKKFESQDTVTFLEAILSGIVDPVDSTLRDFCGQCVREFLKWSIKQTTPKQQEKSPANTKSLFKRLYSLALHPSAFKRLGAALAFNSIYREFREENSLVEQFVFEALVVFLESLALTHTDEKSLGTTQQCCDAINHLKRIIKHKAPALNKEGKRRVPRGFPATKSVCLQDVVMWLLVQCGRPQTECRHKAMELFYEFVPLLPGNNSPSSWLADVLKKRDVSFLINKFEGGGSDAKSPSGILSQPTLRDMQEPFSLLTVMRWMDMFLAALDCYNTFFELRMIKPHEILGVNERSSFLEAVDFFLETIALHDIHAAEQCFDCRSRGNIFSPQEREVYNYSKCTIIVRIMEFVTMILEICQQDFWKLLEKELLNANFIELLVMTVCDPSHIGFNTADVQVMKNLPDISVRLLKALMKSPYKEYLQLCLKKRITPQSFEDLCSVDLFNSDARFDQVRFSAVLSACKQLQKSGLLHSVLHSQDERPHPSIGSKLLSVVYKSIAPGSERSSLPAVDISSKRLADRLLQLAFAIDDQCEELVSLLLNTVVLSVPLSKASERNFVDFSHGQYFYSLFSDTINQQLLKNLDVIVIHLMESSVSNPQMVGSILNGMLDQSFRERTIRKQQGVKLVTAVLRNWKRLDSWWAKDSSPESKMAVLTLLAKVLQIDSSVSFNTSHEAFTAVFDTYTSLLTDQNLGLNLKGHAVIILPFFTNLSGEKLHDLKNALDQLVAFNFPMSSDEFPKGTLKHNNYVDCTKKFLDALELSQSPMLLQLMTEVLCRDHRHSMEDLFQASFKRISRRSSTDKQVVLLDTVHKMFQNEDLLSNIVRQAFVDRSLLTLMSHCSLDALREFFCKIIVQAMDTLNSRFTKSNECVFDTQITKKMGYYKMLEVMYIRLSKDDVHSKDSKINQAYRGSVSVEGNELTKALIKLCYDAFTENMAGENQLLEKRRQYHCAAYNCAIAVISCVFTESKFYQGFLFTEKSEKNLLIFENLIDLKRQYVFPVEIEVPLERKKRYIAIRKEAREAWNDGQDEPKYLASASYMMDSSLSEEMSQFDFSTGVQGFSYSSQDVTASSAHFRRKETSEYMVLNDEMELEMDELNQHECMAPLTTLIKHMQRNQITPKVEEGVIPVDLPLWMKFLHSKLGNPSVPLNIRLFIAKLIVNTEDVFRPYAKQWLGPMLQLVVSGDNGGEGIHYMVVEIAVTVLSWTSVTTPKGNIKDEILANRLLEFLMKNAFHQKRAVFRHNLEIIKTVIECWKNCLSIPYSLIFEKFSSGDPDTKDNSVGIQLLGIVLANNLPPFDLKCEIDRVRYFQALVSNMGLLRYKEVYAAAAEVLGLALQYIAERQNILEDPVYDCVIKQLKRHQNTQQDKFIICLNKVVKNFPPLADRFMNAVFFLIPKLHGVMKNYCLEVIMCRAEEIPDLYLQLKSKDFIQIMKHRDDERQRVCLDIIYKMLSTLKPPELKELLPGVTGFISHPSVICRQRMYDILMWIYDNYSDPESQADGDSQEVLSLAKEILLQGLIDENAELQLIVRNFWSDETRLPANILDRMLMLLNSLYSAKIETQYLSLITNFLLEMTSKSPDYSRKIFEHPLSECKFHDFVIDSSWRYRSTMLTPMFVETQASQSTNRNSSQERSLSISGSVGGRVRATQRQYEFTPTQNVSGRSSFNWLTGNSIDTLAEYTVPSSSESLSSSMLLVNKRSEKFKQAAFKPVGPDFGKKRLSLPGDKVDSKTKGIDERAEILRLRRRFLKDQEKVSLIYARKGVAEQKREKEMKSELKMKFDGQVTLYRSYRVGDLPDIQIEHCSLIAPLQGLAQKDPTFAKQLFSSLFGGIFCEVKKSKIPSEKKAIIQKLLKDFNHFLSTSVSYFPPFIACIQEISYKHRELLELDSANVSTSCLASLQQPVGILLLEHALMALSPAEEPPSKRMRGRTELPPDVVKWLELAKLYRSLGDYDVLRGIFSGKIGTKDITQQALLAEARSDYAEAAKCYDEALSKEDWEDGEPTEAEKDFWELASLECYDHLTEWKSLEYCATVNIDSGKPPDLNKTWSDPFYQETYLPYIIRSKLKLLLNGENDQTLLTFIDEAMKTEQKKALIEMHYSQELSLLYILQDDFDRAKYYIGNGIQIFMQSYSSIDTLLYQSRMSKLQSVQALTEIQDFINFMTKTSNIASQAKSLKRLLRTWTSRYPDAKMDPMNIWDDIITNRCFFLDKLQEKFLCDKANDSMEVDEESSVGDQMEVDQQDEDIHSMIRSCKFNMKLKMIESARKQNSFSIAKKLLKGLRREAKTREDWLVRWNYAYCRFVHSCSQSQSCPERVLSVLKTISLLEDTKSDYLNKNIMAFRNQNLLLGTTYHIMANALSQDPKCCEQIEEEKTGKILELSGESSESPEKILAGLNKRAFQCFSSAARKSEEEVQSLSMEHVDVKGVIDAYMTLVGFCDQHLRKEEEGSLEINAADLQLFPAIVVEKMIKALKLNSREARLRFPRLLQIIERYPAETLGLVTRELPSVPCWQFIGWISQMMALLDKDEAVAVQHTVEEIVDTYPQAIIYPFTISSESYCFKDTAAGCRNKEFVASIKNKLDRGGVVQDFIHALEQLSNPVMLFKDWVADVRNELVKTQRNKIILKEMYEGMYKNLGDVKAPGLGWLRKRFVQAFGKDFDSHFGKGGSKLLDMKISDFNEITTALLTKMNKTHKEPGNLKECSPWMSEFRAEFLRNELEVPGQYDGKGKPLPEYHVKISGFDERIMVLESLRKPKRITIRGSDEQEHPFLVKGGEDLRQDQRIEQLFDVMNIVLSRDAACSQRNMQLKTYQVIPMTTRLGLIKWLENTCTLKEFLRNSMTEEEDANYNSLKGPRAAYSDWLSKMGGKAQGLSRYNAMYKNASRTETVIAFKSRESSVPEDLLRRAFVKMSTSPEAFLALRSHFVSSHALMCVSHWILGIGDRHLSNFMINKETGGMVGIDFGHAFGSATQFLPVPELMPFRLTRQFVNLMMPVKEWGLIYSVMVHALRAYRADPDLLISTMDVFVKEPSLDWKNFEQRQLKKGGTWIKEINTAEVNWYPLQKVSYVKRKLTGANPARITCDELRLGYEKLPFYNDFAAVARGSADHNIRAKEPEDRLSEETQVRCLIDQATDPNLLGRVWEGWEPWM.

3 HEAT repeats span residues 900 to 937, 1000 to 1036, and 1050 to 1085; these read VIYL…VAYM, QDTV…LKWS, and ANTK…YREF. TPR repeat units follow at residues 1265–1305 and 1722–1755; these read YNTF…HDIH and PMSS…SQSP. S2055 carries the post-translational modification Phosphoserine; by autocatalysis. The TPR 3 repeat unit spans residues 2207–2240; sequence DEILANRLLEFLMKNAFHQKRAVFRHNLEIIKTV. T2609 carries the post-translational modification Phosphothreonine; by autocatalysis. Residues 2611–2629 are compositionally biased toward polar residues; the sequence is ASQSTNRNSSQERSLSISG. Residues 2611 to 2631 are disordered; sequence ASQSTNRNSSQERSLSISGSV. The residue at position 2612 (S2612) is a Phosphoserine; by autocatalysis. T2638 and T2647 each carry phosphothreonine; by autocatalysis. The FAT domain occupies 2880 to 3545; that stretch reads NVSTSCLASL…IYPFTISSES (666 aa). The 332-residue stretch at 3728–4059 folds into the PI3K/PI4K catalytic domain; the sequence is FDERIMVLES…VSYVKRKLTG (332 aa). Positions 3734–3740 are G-loop; that stretch reads VLESLRK. Residues 3925–3933 are catalytic loop; it reads GIGDRHLSN. The interval 3945 to 3970 is activation loop; it reads GIDFGHAFGSATQFLPVPELMPFRLT. Residues 4102–4134 enclose the FATC domain; that stretch reads DRLSEETQVRCLIDQATDPNLLGRVWEGWEPWM.

Belongs to the PI3/PI4-kinase family. DNA-PK is a heterotrimer of PRKDC and the Ku dimer (composed of XRCC6/Ku70 and XRCC5/Ku86). Component of the core long-range non-homologous end joining (NHEJ) complex (also named DNA-PK complex) composed of PRKDC, LIG4, XRCC4, XRCC6/Ku70, XRCC5/Ku86 and NHEJ1/XLF. Additional component of the NHEJ complex includes PAXX. Following autophosphorylation, PRKDC dissociates from DNA. In terms of processing, autophosphorylated at two clusters, the T2609 cluster and the S2056 cluster. Autophosphorylated on Ser-2055, Thr-2609, Thr-2638 and Thr-2647. Ser-2055 and Thr-2609 are DNA damage-inducible phosphorylation sites (inducible with ionizing radiation, IR) dephosphorylated by PPP5C. Autophosphorylation induces a conformational change that leads to remodeling of the DNA-PK complex, requisite for efficient end processing and DNA repair. Autophosphorylation in trans within DNA-PK complexes loaded on DNA ends leads to the dissociation of PRKDC from DNA and the transition into the short-range NHEJ complex. Autophosphorylation of the T2609 cluster is required for hematopoietic development and protein synthesis in erythrocytes precursors.

It localises to the nucleus. Its subcellular location is the nucleolus. The enzyme catalyses L-seryl-[protein] + ATP = O-phospho-L-seryl-[protein] + ADP + H(+). It catalyses the reaction L-threonyl-[protein] + ATP = O-phospho-L-threonyl-[protein] + ADP + H(+). In terms of biological role, serine/threonine-protein kinase that acts as a molecular sensor for DNA damage. Involved in DNA nonhomologous end joining (NHEJ) required for double-strand break (DSB) repair and V(D)J recombination. Must be bound to DNA to express its catalytic properties. Promotes processing of hairpin DNA structures in V(D)J recombination by activation of the hairpin endonuclease artemis (DCLRE1C). Recruited by XRCC5 and XRCC6 to DNA ends and is required to (1) protect and align broken ends of DNA, thereby preventing their degradation, (2) and sequester the DSB for repair by NHEJ. Acts as a scaffold protein to aid the localization of DNA repair proteins to the site of damage. The assembly of the DNA-PK complex at DNA ends is also required for the NHEJ ligation step. Found at the ends of chromosomes, suggesting a further role in the maintenance of telomeric stability and the prevention of chromosomal end fusion. As part of the DNA-PK complex, involved in the early steps of ribosome assembly by promoting the processing of precursor rRNA into mature 18S rRNA in the small-subunit processome. Recognizes the substrate consensus sequence [ST]-Q. Phosphorylates 'Ser-139' of histone variant H2AX, thereby regulating DNA damage response mechanism. This chain is DNA-dependent protein kinase catalytic subunit (PRKDC), found in Gallus gallus (Chicken).